Here is a 188-residue protein sequence, read N- to C-terminus: Adenine phosphoribosyltransferase (188 aa).

Belongs to the purine/pyrimidine phosphoribosyltransferase family. As to quaternary structure, homodimer.

The protein resides in the cytoplasm. The enzyme catalyses AMP + diphosphate = 5-phospho-alpha-D-ribose 1-diphosphate + adenine. It participates in purine metabolism; AMP biosynthesis via salvage pathway; AMP from adenine: step 1/1. Catalyzes a salvage reaction resulting in the formation of AMP, that is energically less costly than de novo synthesis. This chain is Adenine phosphoribosyltransferase, found in Paraburkholderia xenovorans (strain LB400).